Consider the following 413-residue polypeptide: Enhanced ethylene response protein 5 (413 aa).

The PCI domain maps to 216 to 402 (VTYMYYTGRL…KVVVLSKQDP (187 aa)).

As to quaternary structure, interacts with EIN2 (via C-terminus). May also interact weakly with CSN8. Interacts with DSS1(V), AMPD, SAC3A, SAC3B and At5g61290 (AC Q9FLK4). Interacts with UCH1 and UCH2. Interacts with NUP1, anchoring the TREX-2 complex on the nuclear pore complex. As to expression, expressed at low levels in roots, leaves, stems and shoots. Detected in seedlings, roots, leaves and anthers.

It is found in the nucleus. Functionally, involved in the regulation of ethylene response. Probable TREX-2 component required for nuclear RNA export. The TREX-2 complex (transcription and export complex 2) functions in docking export-competent ribonucleoprotein particles (mRNPs) to the nuclear entrance of the nuclear pore complex (nuclear basket). TREX-2 participates in mRNA export and accurate chromatin positioning in the nucleus by tethering genes to the nuclear periphery. This Arabidopsis thaliana (Mouse-ear cress) protein is Enhanced ethylene response protein 5.